Consider the following 640-residue polypeptide: Dextranase (640 aa).

The signal sequence occupies residues 1-32; it reads MPGTGLGRLAKRMTAAAAVFFISTSAVLPAQA. A propeptide spanning residues 33-49 is cleaved from the precursor; it reads ATAPAAAPPGVPAALKA. The interval 248-269 is disordered; that stretch reads EQKERLVPTEESGSIHYPEPGE.

Belongs to the glycosyl hydrolase 49 family.

It localises to the secreted. It catalyses the reaction Endohydrolysis of (1-&gt;6)-alpha-D-glucosidic linkages in dextran.. Its function is as follows. Efficiently decomposes water-insoluble glucan as well as dextran. In Arthrobacter sp. (strain CB-8), this protein is Dextranase.